We begin with the raw amino-acid sequence, 639 residues long: tRNA-dihydrouridine(47) synthase [NAD(P)(+)]-like (639 aa).

2 stretches are compositionally biased toward polar residues: residues 1 to 19 (MAES…TVTQ) and 54 to 65 (QTCSELSGNDAE). Disordered stretches follow at residues 1–20 (MAES…VTQK) and 52–122 (DKQT…HSQF). The span at 66–85 (NTVRAEDAAEPEAKRIKLDD) shows a compositional bias: basic and acidic residues. Residues 103-119 (EKKRARGQNKSRPHMKH) show a composition bias toward basic residues. 2 C3H1-type zinc fingers span residues 122–152 (FEEN…HDVA) and 160–190 (EDIR…HLGD). FMN is bound by residues 300 to 302 (PLT) and Gln-354. Cys-385 acts as the Proton donor in catalysis. Residues Lys-424, His-454, 486 to 488 (NGD), and 509 to 510 (AR) contribute to the FMN site.

This sequence belongs to the Dus family. Dus3 subfamily. The cofactor is FMN.

The enzyme catalyses 5,6-dihydrouridine(47) in tRNA + NAD(+) = uridine(47) in tRNA + NADH + H(+). The catalysed reaction is 5,6-dihydrouridine(47) in tRNA + NADP(+) = uridine(47) in tRNA + NADPH + H(+). It carries out the reaction a 5,6-dihydrouridine in mRNA + NAD(+) = a uridine in mRNA + NADH + H(+). It catalyses the reaction a 5,6-dihydrouridine in mRNA + NADP(+) = a uridine in mRNA + NADPH + H(+). Functionally, catalyzes the synthesis of dihydrouridine, a modified base, in various RNAs, such as tRNAs, mRNAs and some long non-coding RNAs (lncRNAs). Mainly modifies the uridine in position 47 (U47) in the D-loop of most cytoplasmic tRNAs. Also able to mediate the formation of dihydrouridine in some mRNAs, thereby regulating their translation. The sequence is that of tRNA-dihydrouridine(47) synthase [NAD(P)(+)]-like (dus3l) from Xenopus tropicalis (Western clawed frog).